The chain runs to 394 residues: Acryloyl-CoA reductase (NADH) (394 aa).

FAD-binding positions include 135 to 144 (FALTEPNAGS) and 170 to 172 (FIS). Position 144 (serine 144) interacts with substrate. 254 to 257 (DGAR) lines the substrate pocket. Residues arginine 282, glutamine 293, and 350-354 (QIHGG) each bind FAD. The active-site Proton acceptor is the glutamate 377. Glycine 378 contributes to the substrate binding site. 379 to 381 (TSE) serves as a coordination point for FAD.

Heterohexadecamer; tetramer of tetramers. Each tetramer is composed of 2 alpha (AcrC), a beta (AcrA) and a gamma (AcrB) subunit. Requires FAD as cofactor.

It is found in the cytoplasm. The enzyme catalyses propanoyl-CoA + NAD(+) = acryloyl-CoA + NADH + H(+). Functionally, probable catalytic subunit of the acryloyl-CoA reductase complex involved in the pathway of L-alanine fermentation. Catalyzes the irreversible NADH-dependent formation of propionyl-CoA from acryloyl-CoA. It can also use 3-buten-2-one as substrate. The chain is Acryloyl-CoA reductase (NADH) (acrC) from Anaerotignum propionicum (Clostridium propionicum).